The following is a 258-amino-acid chain: Glucose 1-dehydrogenase 2 (258 aa).

11–35 (IVTGSSKGIGKAIAERFGKEKMNVV) serves as a coordination point for NADP(+). A substrate-binding site is contributed by serine 146. Tyrosine 159 acts as the Proton acceptor in catalysis.

Belongs to the short-chain dehydrogenases/reductases (SDR) family. Homotetramer.

The enzyme catalyses D-glucose + NAD(+) = D-glucono-1,5-lactone + NADH + H(+). It carries out the reaction D-glucose + NADP(+) = D-glucono-1,5-lactone + NADPH + H(+). The chain is Glucose 1-dehydrogenase 2 (ycdF) from Bacillus subtilis (strain 168).